A 193-amino-acid polypeptide reads, in one-letter code: MRLTDIEIEQALDNGSIVIEPRPSNDAISGVSVDVRLGGQFRVFKDHTAPFIDLSGPSTEVQAALDRVMSEIIEIPDGEAFFLHPGELALAVTYESVTLPADIVGWLDGRSSLARLGLMVHVTAHRIDPGWQGKIVLEFYNSGKLPLALRPRMTIGALNFERLSGPVARPYNKRKNAKYKDQQDAVASRISQD.

DCTP contacts are provided by residues Arg110–Arg115, Asp128, Val136–Glu138, Tyr171, Lys178, and Gln182. Catalysis depends on Glu138, which acts as the Proton donor/acceptor. A disordered region spans residues Lys173–Asp193.

It belongs to the dCTP deaminase family. Homotrimer.

The catalysed reaction is dCTP + H2O + H(+) = dUTP + NH4(+). It participates in pyrimidine metabolism; dUMP biosynthesis; dUMP from dCTP (dUTP route): step 1/2. Its function is as follows. Catalyzes the deamination of dCTP to dUTP. This is dCTP deaminase from Shewanella sp. (strain ANA-3).